The primary structure comprises 333 residues: 4-hydroxyproline 2-epimerase (333 aa).

Catalysis depends on C90, which acts as the Proton acceptor. Residues 91–92 (GH), H223, and D249 each bind substrate. The active-site Proton donor is the C253. 254-255 (GT) contributes to the substrate binding site.

It belongs to the proline racemase family.

It catalyses the reaction trans-4-hydroxy-L-proline = cis-4-hydroxy-D-proline. Its function is as follows. Catalyzes the epimerization of trans-4-hydroxy-L-proline (t4LHyp) to cis-4-hydroxy-D-proline (c4DHyp). Is likely involved in a degradation pathway that converts t4LHyp to alpha-ketoglutarate. Displays no proline racemase activity. This chain is 4-hydroxyproline 2-epimerase, found in Shewanella loihica (strain ATCC BAA-1088 / PV-4).